A 146-amino-acid chain; its full sequence is Large ribosomal subunit protein uL23B (146 aa).

A disordered region spans residues 1–22; sequence MAPSSNKVGKAIQAKKAVVKGS.

This sequence belongs to the universal ribosomal protein uL23 family.

This protein binds to a specific region on the 26S rRNA. The protein is Large ribosomal subunit protein uL23B (rpl-23A.2) of Caenorhabditis elegans.